Reading from the N-terminus, the 167-residue chain is Keratin-associated protein 1-3 (167 aa).

It belongs to the KRTAP type 1 family. Interacts with hair keratins. As to expression, expressed in the middle/upper portions of the hair cortex, in the region termed the keratogenous zone.

Its function is as follows. In the hair cortex, hair keratin intermediate filaments are embedded in an interfilamentous matrix, consisting of hair keratin-associated proteins (KRTAP), which are essential for the formation of a rigid and resistant hair shaft through their extensive disulfide bond cross-linking with abundant cysteine residues of hair keratins. The matrix proteins include the high-sulfur and high-glycine-tyrosine keratins. This Homo sapiens (Human) protein is Keratin-associated protein 1-3 (KRTAP1-3).